We begin with the raw amino-acid sequence, 801 residues long: Phosphatidylinositol 4-phosphate 5-kinase 1 (801 aa).

The signal sequence occupies residues 1-21 (MPGLHVVSFLVVLLLQLRSSG). MORN repeat units follow at residues 41-63 (YVGSFDGLVPHGPGKYMWTDGAL), 64-86 (YDGEWDKSKMTGRGLIQWPSGAS), 87-109 (YEGDFRGGFIDGAGTFKGVDGSV), 110-132 (YKGSWRMNKKHGMGTMVYSNSDT), 133-155 (YEGFWNEGLPDEFGKYTWADGNV), 156-178 (YIGRWKSGKMNGSGVMQWINGDT), 182-201 (NWLNGLAHGKGYCKYASGAC), and 202-223 (YIGTWDRGLKDGHGTFYQPGSK). Residues 366 to 797 (GHRSYYLMLN…RFISFLEKVF (432 aa)) form the PIPK domain.

In terms of tissue distribution, expressed in young seedlings, shoot and seeds, and at lower level in roots, stem and leaf.

The catalysed reaction is a 1,2-diacyl-sn-glycero-3-phospho-(1D-myo-inositol 4-phosphate) + ATP = a 1,2-diacyl-sn-glycero-3-phospho-(1D-myo-inositol-4,5-bisphosphate) + ADP + H(+). In terms of biological role, involved in flowering. May suppress floral initiation by modifying the expression of genes related to floral induction. This Oryza sativa subsp. japonica (Rice) protein is Phosphatidylinositol 4-phosphate 5-kinase 1 (PIPK1).